A 360-amino-acid chain; its full sequence is DNA replication and repair protein RecF (360 aa).

33-40 (GENGSGKT) serves as a coordination point for ATP.

Belongs to the RecF family.

It is found in the cytoplasm. The RecF protein is involved in DNA metabolism; it is required for DNA replication and normal SOS inducibility. RecF binds preferentially to single-stranded, linear DNA. It also seems to bind ATP. The chain is DNA replication and repair protein RecF from Rickettsia bellii (strain OSU 85-389).